The primary structure comprises 139 residues: Phosphoribosyl-AMP cyclohydrolase (139 aa).

A Mg(2+)-binding site is contributed by D92. C93 contacts Zn(2+). Positions 94 and 96 each coordinate Mg(2+). Residues C111 and C118 each coordinate Zn(2+).

This sequence belongs to the PRA-CH family. As to quaternary structure, homodimer. Mg(2+) is required as a cofactor. Requires Zn(2+) as cofactor.

It is found in the cytoplasm. The enzyme catalyses 1-(5-phospho-beta-D-ribosyl)-5'-AMP + H2O = 1-(5-phospho-beta-D-ribosyl)-5-[(5-phospho-beta-D-ribosylamino)methylideneamino]imidazole-4-carboxamide. The protein operates within amino-acid biosynthesis; L-histidine biosynthesis; L-histidine from 5-phospho-alpha-D-ribose 1-diphosphate: step 3/9. Catalyzes the hydrolysis of the adenine ring of phosphoribosyl-AMP. This is Phosphoribosyl-AMP cyclohydrolase from Caulobacter vibrioides (strain ATCC 19089 / CIP 103742 / CB 15) (Caulobacter crescentus).